The sequence spans 470 residues: Glutamate--tRNA ligase 2 (470 aa).

The 'HIGH' region signature appears at proline 11–glycine 21. The short motif at lysine 238–arginine 242 is the 'KMSKS' region element. Residue lysine 241 participates in ATP binding.

This sequence belongs to the class-I aminoacyl-tRNA synthetase family. Glutamate--tRNA ligase type 1 subfamily. In terms of assembly, monomer.

The protein resides in the cytoplasm. The catalysed reaction is tRNA(Glu) + L-glutamate + ATP = L-glutamyl-tRNA(Glu) + AMP + diphosphate. Catalyzes the attachment of glutamate to tRNA(Glu) in a two-step reaction: glutamate is first activated by ATP to form Glu-AMP and then transferred to the acceptor end of tRNA(Glu). The protein is Glutamate--tRNA ligase 2 of Ehrlichia ruminantium (strain Gardel).